A 323-amino-acid polypeptide reads, in one-letter code: Prenyl transferase (323 aa).

Isopentenyl diphosphate is bound by residues K46, R49, and H81. Residues D88 and D92 each contribute to the Mg(2+) site. R97 is an an all-trans-polyprenyl diphosphate binding site. R98 is an isopentenyl diphosphate binding site. K174, T175, and Q212 together coordinate an all-trans-polyprenyl diphosphate.

This sequence belongs to the FPP/GGPP synthase family. Mg(2+) serves as cofactor.

It is found in the plastid. The protein resides in the chloroplast. Possible role in synthesis of the nonaprenyl side chain of plastoquinone or in synthesis of other prenyl chains such as undekaprenyl pyrophosphate. The chain is Prenyl transferase (preA) from Cyanidium caldarium (Red alga).